The sequence spans 420 residues: Protein TabA (420 aa).

The residue at position 57 (Lys-57) is an N6-(pyridoxal phosphate)lysine.

Belongs to the Orn/Lys/Arg decarboxylase class-II family. The cofactor is pyridoxal 5'-phosphate.

Its function is as follows. Involved in tabtoxin production and pathogenicity. This is Protein TabA (tabA) from Pseudomonas amygdali pv. tabaci (Pseudomonas syringae pv. tabaci).